Reading from the N-terminus, the 86-residue chain is Exodeoxyribonuclease 7 small subunit (86 aa).

The disordered stretch occupies residues 67 to 86 (LSDPAQPEASEPFDPPSHDG).

It belongs to the XseB family. Heterooligomer composed of large and small subunits.

Its subcellular location is the cytoplasm. It carries out the reaction Exonucleolytic cleavage in either 5'- to 3'- or 3'- to 5'-direction to yield nucleoside 5'-phosphates.. In terms of biological role, bidirectionally degrades single-stranded DNA into large acid-insoluble oligonucleotides, which are then degraded further into small acid-soluble oligonucleotides. This chain is Exodeoxyribonuclease 7 small subunit, found in Stenotrophomonas maltophilia (strain K279a).